Consider the following 383-residue polypeptide: Probable sphingolipid long chain base-responsive protein pil2 (383 aa).

A Phosphoserine modification is found at Ser-162. Disordered regions lie at residues 292-336 (PRTD…EDYQ) and 356-383 (GEED…PIAA). Low complexity predominate over residues 311–324 (TTSGTTHSYTSTGS). 2 stretches are compositionally biased toward polar residues: residues 325-336 (KRYSQMGTEDYQ) and 368-383 (VAET…PIAA).

In terms of processing, phosphorylated by ksg1 and ppk21. Phosphorylation is regulated by sphingolipid long chain bases (LCBs).

Its function is as follows. Negative regulator of cell wall integrity (CWI) in unstressed cells, probably by inhibiting protein kinase ksg1/ppk21 activity and regulating their downstream CWI pathways pck2-MAP kinase pathway and protein kinase gad8 pathway. Activity may be regulated by the transient increase of sphingolipid long chain bases (LCBs) during heat stress. The polypeptide is Probable sphingolipid long chain base-responsive protein pil2 (pil2) (Schizosaccharomyces pombe (strain 972 / ATCC 24843) (Fission yeast)).